Consider the following 430-residue polypeptide: FAD-dependent monooxygenase asL4 (430 aa).

Residues 11–14, 33–34, R108, and Y278 contribute to the FAD site; these read GGIA and ER.

The protein belongs to the aromatic-ring hydroxylase family. Requires FAD as cofactor.

Its pathway is secondary metabolite biosynthesis; terpenoid biosynthesis. In terms of biological role, flavin-dependent monooxygenase; part of the gene cluster that mediates the biosynthesis of xenovulene A, an unusual meroterpenoid that has potent inhibitory effects on the human gamma-aminobutyrate A (GABAA) benzodiazepine receptor. The first step of xenovulene A biosynthesis is the biosynthesis of 3-methylorcinaldehyde performed by the non-reducing polyketide synthase aspks1. The salicylate hydroxylase asL1 then catalyzes the oxidative dearomatization of 3-methylorcinaldehyde to yield a dearomatized hydroxycyclohexadione. The 2-oxoglutarate-dependent dioxygenase asL3 further catalyzes the oxidative ring expansion to provide the first tropolone metabolite. The cytochrome P450 monooxygenase asR2 allows the synthesis of tropolone hemiacetal. In parallel, a previously unrecognised class of terpene cyclase, asR6, produces alpha-humulene from farnesylpyrophosphate (FPP). The putative Diels-Alderase asR5 probably catalyzes the formation of the tropolone-humulene skeleton by linking humulene and the polyketide moiety. Oxidative-ring contractions catalyzed by asL4 and asL6 then processively remove carbon atoms from the polyketide to yield xenovulene A. The chain is FAD-dependent monooxygenase asL4 from Sarocladium schorii (Acremonium strictum (strain IMI 501407)).